The primary structure comprises 230 residues: Nicotinamide riboside kinase 2 (230 aa).

9 to 17 (GMTNGGKTT) is a binding site for ATP. Residues Thr-16 and Asp-35 each contribute to the Mg(2+) site. Asp-35 functions as the Proton acceptor in the catalytic mechanism. Residues 35 to 38 (DDFF) and 54 to 55 (WD) contribute to the substrate site. Residue Arg-130 coordinates ATP. Substrate contacts are provided by residues Arg-131 and 136–137 (YT). Residues 134-136 (RNY) and 174-176 (KSR) contribute to the ATP site. Residues 191–230 (LLNRSQESAPSPARPARTQGPGRGCGHRTARPAASQQDSM) form a disordered region.

Belongs to the uridine kinase family. NRK subfamily. In terms of assembly, monomer. Interacts with ITGB1 alone or when associated with alpha-7, but not with alpha-5. As to expression, predominantly expressed in skeletal muscle and, at a much lower level, in the heart (at protein level). No expression in brain, kidney, liver, lung, pancreas nor placenta.

The enzyme catalyses beta-nicotinamide D-riboside + ATP = beta-nicotinamide D-ribonucleotide + ADP + H(+). The catalysed reaction is beta-D-ribosylnicotinate + ATP = nicotinate beta-D-ribonucleotide + ADP + H(+). It functions in the pathway cofactor biosynthesis; NAD(+) biosynthesis. In terms of biological role, catalyzes the phosphorylation of nicotinamide riboside (NR) and nicotinic acid riboside (NaR) to form nicotinamide mononucleotide (NMN) and nicotinic acid mononucleotide (NaMN). Reduces laminin matrix deposition and cell adhesion to laminin, but not to fibronectin. Involved in the regulation of PXN at the protein level and of PXN tyrosine phosphorylation. May play a role in the regulation of terminal myogenesis. This Homo sapiens (Human) protein is Nicotinamide riboside kinase 2 (NMRK2).